The following is a 467-amino-acid chain: MTDAKQTSPRRRRSWAEPYKIKVVEPLKITTRAEREQAIAQAGYNTFLLRSEDVYIDLLTDSGTSAMSDYQWAGMMLGDEAYAGSKNFYNLEASIQKYYGYRHIVPTHQGRGAENILSQILIKPGDYIPGNMYFTTTRLHQELAGGTFVDVIIDEAHDAQSLHPFKGNVDLQKLTDLIERVGAERIPYISVAGTVNMAGGQPISMANLRAVHQLAQTYGIRIILDATRAVENAHFIQQREEDYSSQAIATILREFCSYTDGCTMSGKKDALVNIGGWLALNDYNLYEEARNLIVIYEGLHTYGGMAGRDMEAMARGIEESVQDDHIRARVGQVEYLGQKLLDWGIPIVVPIGGHAIYLDAKRFLPQIPQDQFPAQRLAAELYLEAGIRAMERGIVSAGRNKETGDNYYPELELVRLTIPRRVYTQAHMDLTAEAVEEVYHNRDRLRGLKMIYEPKYLRFFQARFELQ.

K268 carries the post-translational modification N6-(pyridoxal phosphate)lysine.

This sequence belongs to the beta-eliminating lyase family. As to quaternary structure, homotetramer. Pyridoxal 5'-phosphate serves as cofactor.

It carries out the reaction L-tyrosine + H2O = phenol + pyruvate + NH4(+). The chain is Tyrosine phenol-lyase from Nostoc punctiforme (strain ATCC 29133 / PCC 73102).